A 519-amino-acid polypeptide reads, in one-letter code: GTPase Der (519 aa).

Composition is skewed to acidic residues over residues 1 to 12 and 30 to 54; these read MDVEGAFADEEE and GYED…PDFG. A disordered region spans residues 1–54; it reads MDVEGAFADEEELAPHGGWASADFDPAEFGYEDSDDDFDAEDFDETEFSNPDFG. EngA-type G domains lie at 81–244 and 254–427; these read CTVA…PEEP and RRVA…DNWD. GTP contacts are provided by residues 87–94, 134–138, 196–199, 260–267, 307–311, and 372–375; these read GRPNVGKS, DTGGW, NKFD, GKPNVGKS, DTAGL, and NKWD. The 83-residue stretch at 428–510 folds into the KH-like domain; the sequence is RRISTGQLNT…PVRIAVRVRE (83 aa).

The protein belongs to the TRAFAC class TrmE-Era-EngA-EngB-Septin-like GTPase superfamily. EngA (Der) GTPase family. In terms of assembly, associates with the 50S ribosomal subunit.

In terms of biological role, GTPase that plays an essential role in the late steps of ribosome biogenesis. In Corynebacterium glutamicum (strain ATCC 13032 / DSM 20300 / JCM 1318 / BCRC 11384 / CCUG 27702 / LMG 3730 / NBRC 12168 / NCIMB 10025 / NRRL B-2784 / 534), this protein is GTPase Der.